Here is a 96-residue protein sequence, read N- to C-terminus: Co-chaperonin GroES (96 aa).

This sequence belongs to the GroES chaperonin family. Heptamer of 7 subunits arranged in a ring. Interacts with the chaperonin GroEL.

Its subcellular location is the cytoplasm. Together with the chaperonin GroEL, plays an essential role in assisting protein folding. The GroEL-GroES system forms a nano-cage that allows encapsulation of the non-native substrate proteins and provides a physical environment optimized to promote and accelerate protein folding. GroES binds to the apical surface of the GroEL ring, thereby capping the opening of the GroEL channel. This is Co-chaperonin GroES from Shewanella piezotolerans (strain WP3 / JCM 13877).